Consider the following 535-residue polypeptide: Signal transduction histidine-protein kinase AfsQ2 (535 aa).

Topologically, residues 1–30 (MTREHQGGTRGLAAARKGFWSGLRFTSLRL) are cytoplasmic. A helical membrane pass occupies residues 31-52 (RLVLVFGLVALTAAVSASGIAY). Residues 53-198 (WLNREAVLTR…SLEPEAKDLN (146 aa)) are Extracellular-facing. Residues 199–219 (SLAWSLGIATALALLGSALLA) traverse the membrane as a helical segment. Residues 220-535 (QALATTVLKP…DRGKDAKGQV (316 aa)) are Cytoplasmic-facing. The HAMP domain occupies 224-276 (TTVLKPVHRLGVAARRLGEGKLDTRLRVSGTDELADLSRTFNSAAENLEKRVA). In terms of domain architecture, Histidine kinase spans 291 to 510 (DMSHELRTPL…VFTLRLPQDP (220 aa)). A Phosphohistidine modification is found at His294. The interval 493–535 (ENAPEGGAVFTLRLPQDPSPPADEDGGPDEETEDRGKDAKGQV) is disordered. Residues 514 to 525 (ADEDGGPDEETE) show a composition bias toward acidic residues. A compositionally biased stretch (basic and acidic residues) spans 526-535 (DRGKDAKGQV).

It localises to the cell membrane. It carries out the reaction ATP + protein L-histidine = ADP + protein N-phospho-L-histidine.. Its function is as follows. Forms part of a two-component regulatory system AfsQ1/AfsQ2 involved in secondary metabolism. May activate AfsQ1 by phosphorylation. The chain is Signal transduction histidine-protein kinase AfsQ2 (afsQ2) from Streptomyces coelicolor (strain ATCC BAA-471 / A3(2) / M145).